A 469-amino-acid polypeptide reads, in one-letter code: Ribulose bisphosphate carboxylase large chain (469 aa).

K5 carries the post-translational modification N6,N6,N6-trimethyllysine. The substrate site is built by N114 and T164. K166 functions as the Proton acceptor in the catalytic mechanism. K168 provides a ligand contact to substrate. Residues K192, D194, and E195 each coordinate Mg(2+). The residue at position 192 (K192) is an N6-carboxylysine. H285 (proton acceptor) is an active-site residue. R286, H318, and S370 together coordinate substrate.

It belongs to the RuBisCO large chain family. Type I subfamily. In terms of assembly, heterohexadecamer of 8 large chains and 8 small chains; disulfide-linked. The disulfide link is formed within the large subunit homodimers. The cofactor is Mg(2+). Post-translationally, the disulfide bond which can form in the large chain dimeric partners within the hexadecamer appears to be associated with oxidative stress and protein turnover.

It localises to the plastid. The protein resides in the chloroplast. It carries out the reaction 2 (2R)-3-phosphoglycerate + 2 H(+) = D-ribulose 1,5-bisphosphate + CO2 + H2O. The catalysed reaction is D-ribulose 1,5-bisphosphate + O2 = 2-phosphoglycolate + (2R)-3-phosphoglycerate + 2 H(+). Its function is as follows. RuBisCO catalyzes two reactions: the carboxylation of D-ribulose 1,5-bisphosphate, the primary event in carbon dioxide fixation, as well as the oxidative fragmentation of the pentose substrate in the photorespiration process. Both reactions occur simultaneously and in competition at the same active site. The sequence is that of Ribulose bisphosphate carboxylase large chain from Antirhea lucida (Palo iloron).